We begin with the raw amino-acid sequence, 848 residues long: Protein MEI2-like 2 (848 aa).

2 RRM domains span residues 197 to 270 (RTLF…FSIP) and 282 to 355 (GTLV…PSRP). Disordered regions lie at residues 370 to 400 (IDQDEPRSYRIPHVGSPIASSPPGAWAQYSS), 455 to 523 (NQPH…SQGQ), and 826 to 848 (ATGDPFGNEEDNNQNERTAGEEL).

Probable RNA-binding protein that may play a role in growth regulation. This chain is Protein MEI2-like 2 (ML2), found in Oryza sativa subsp. japonica (Rice).